The chain runs to 202 residues: MHDDPQQLELLRVARIGRAQGLKGEVTVRLYTDDPEWRFEPDSVLYSQDGETEYIVEGSRTFKDRWILKLEGVDDRNAAEALNGVELYGEVDDAEDMLEADEWYPKDLIGLEARLVEGNGLGLPAGQVVGKVVDVVDSPAQSLLKIRLTEPVVTGQNSKGEDVVEKTALVPFVEALVPDIDLEEQYLTLDPPGGLIPGCGMI.

The PRC barrel domain occupies 100-195 (ADEWYPKDLI…YLTLDPPGGL (96 aa)).

Belongs to the RimM family. Binds ribosomal protein uS19.

The protein localises to the cytoplasm. In terms of biological role, an accessory protein needed during the final step in the assembly of 30S ribosomal subunit, possibly for assembly of the head region. Essential for efficient processing of 16S rRNA. May be needed both before and after RbfA during the maturation of 16S rRNA. It has affinity for free ribosomal 30S subunits but not for 70S ribosomes. This Bifidobacterium longum (strain NCC 2705) protein is Ribosome maturation factor RimM.